Consider the following 304-residue polypeptide: Quinolinate synthase (304 aa).

Iminosuccinate is bound by residues H24 and S41. Residue C86 participates in [4Fe-4S] cluster binding. Residues 112-114 (YVN) and S129 contribute to the iminosuccinate site. Position 171 (C171) interacts with [4Fe-4S] cluster. Iminosuccinate contacts are provided by residues 197–199 (HPE) and T214. C259 contributes to the [4Fe-4S] cluster binding site.

Belongs to the quinolinate synthase family. Type 2 subfamily. [4Fe-4S] cluster serves as cofactor.

The protein resides in the cytoplasm. It carries out the reaction iminosuccinate + dihydroxyacetone phosphate = quinolinate + phosphate + 2 H2O + H(+). It participates in cofactor biosynthesis; NAD(+) biosynthesis; quinolinate from iminoaspartate: step 1/1. In terms of biological role, catalyzes the condensation of iminoaspartate with dihydroxyacetone phosphate to form quinolinate. This is Quinolinate synthase from Geotalea uraniireducens (strain Rf4) (Geobacter uraniireducens).